The chain runs to 471 residues: Uronate isomerase (471 aa).

The protein belongs to the metallo-dependent hydrolases superfamily. Uronate isomerase family.

It carries out the reaction D-glucuronate = D-fructuronate. The catalysed reaction is aldehydo-D-galacturonate = keto-D-tagaturonate. Its pathway is carbohydrate metabolism; pentose and glucuronate interconversion. This chain is Uronate isomerase, found in Xanthomonas campestris pv. campestris (strain 8004).